The sequence spans 302 residues: Protein FdhE homolog (302 aa).

Belongs to the FdhE family.

Its subcellular location is the cytoplasm. In terms of biological role, necessary for formate dehydrogenase activity. The chain is Protein FdhE homolog from Shewanella sp. (strain MR-4).